Here is a 304-residue protein sequence, read N- to C-terminus: UDP-N-acetylenolpyruvoylglucosamine reductase (304 aa).

Residues 33-198 (RVGGPVDILL…ITATFCFESG (166 aa)) enclose the FAD-binding PCMH-type domain. Residue Arg-177 is part of the active site. Ser-227 functions as the Proton donor in the catalytic mechanism. The active site involves Glu-297.

This sequence belongs to the MurB family. FAD is required as a cofactor.

It localises to the cytoplasm. It catalyses the reaction UDP-N-acetyl-alpha-D-muramate + NADP(+) = UDP-N-acetyl-3-O-(1-carboxyvinyl)-alpha-D-glucosamine + NADPH + H(+). It functions in the pathway cell wall biogenesis; peptidoglycan biosynthesis. Cell wall formation. In Clostridium botulinum (strain Alaska E43 / Type E3), this protein is UDP-N-acetylenolpyruvoylglucosamine reductase.